Reading from the N-terminus, the 177-residue chain is Probable inosine/xanthosine triphosphatase (177 aa).

It belongs to the YjjX NTPase family. As to quaternary structure, homodimer. Requires Mg(2+) as cofactor. The cofactor is Mn(2+).

It carries out the reaction XTP + H2O = XDP + phosphate + H(+). The enzyme catalyses ITP + H2O = IDP + phosphate + H(+). In terms of biological role, phosphatase that hydrolyzes non-canonical purine nucleotides such as XTP and ITP to their respective diphosphate derivatives. Probably excludes non-canonical purines from DNA/RNA precursor pool, thus preventing their incorporation into DNA/RNA and avoiding chromosomal lesions. The chain is Probable inosine/xanthosine triphosphatase from Pyrobaculum arsenaticum (strain DSM 13514 / JCM 11321 / PZ6).